Consider the following 419-residue polypeptide: Serine hydroxymethyltransferase (419 aa).

(6S)-5,6,7,8-tetrahydrofolate contacts are provided by residues Leu121 and Gly125 to Leu127. Lys230 carries the N6-(pyridoxal phosphate)lysine modification.

Belongs to the SHMT family. In terms of assembly, homodimer. Requires pyridoxal 5'-phosphate as cofactor.

The protein localises to the cytoplasm. The enzyme catalyses (6R)-5,10-methylene-5,6,7,8-tetrahydrofolate + glycine + H2O = (6S)-5,6,7,8-tetrahydrofolate + L-serine. Its pathway is one-carbon metabolism; tetrahydrofolate interconversion. The protein operates within amino-acid biosynthesis; glycine biosynthesis; glycine from L-serine: step 1/1. Its function is as follows. Catalyzes the reversible interconversion of serine and glycine with tetrahydrofolate (THF) serving as the one-carbon carrier. This reaction serves as the major source of one-carbon groups required for the biosynthesis of purines, thymidylate, methionine, and other important biomolecules. Also exhibits THF-independent aldolase activity toward beta-hydroxyamino acids, producing glycine and aldehydes, via a retro-aldol mechanism. This is Serine hydroxymethyltransferase from Vesicomyosocius okutanii subsp. Calyptogena okutanii (strain HA).